The following is a 453-amino-acid chain: Glutamyl-tRNA(Gln) amidotransferase subunit A (453 aa).

Active-site charge relay system residues include Lys56 and Ser131. The active-site Acyl-ester intermediate is Ser155.

The protein belongs to the amidase family. GatA subfamily. In terms of assembly, heterotrimer of A, B and C subunits.

The enzyme catalyses L-glutamyl-tRNA(Gln) + L-glutamine + ATP + H2O = L-glutaminyl-tRNA(Gln) + L-glutamate + ADP + phosphate + H(+). Allows the formation of correctly charged Gln-tRNA(Gln) through the transamidation of misacylated Glu-tRNA(Gln) in organisms which lack glutaminyl-tRNA synthetase. The reaction takes place in the presence of glutamine and ATP through an activated gamma-phospho-Glu-tRNA(Gln). The protein is Glutamyl-tRNA(Gln) amidotransferase subunit A of Campylobacter fetus subsp. fetus (strain 82-40).